The following is a 569-amino-acid chain: Proline--tRNA ligase (569 aa).

Belongs to the class-II aminoacyl-tRNA synthetase family. ProS type 1 subfamily. As to quaternary structure, homodimer.

It localises to the cytoplasm. The enzyme catalyses tRNA(Pro) + L-proline + ATP = L-prolyl-tRNA(Pro) + AMP + diphosphate. Its function is as follows. Catalyzes the attachment of proline to tRNA(Pro) in a two-step reaction: proline is first activated by ATP to form Pro-AMP and then transferred to the acceptor end of tRNA(Pro). As ProRS can inadvertently accommodate and process non-cognate amino acids such as alanine and cysteine, to avoid such errors it has two additional distinct editing activities against alanine. One activity is designated as 'pretransfer' editing and involves the tRNA(Pro)-independent hydrolysis of activated Ala-AMP. The other activity is designated 'posttransfer' editing and involves deacylation of mischarged Ala-tRNA(Pro). The misacylated Cys-tRNA(Pro) is not edited by ProRS. This chain is Proline--tRNA ligase, found in Shewanella loihica (strain ATCC BAA-1088 / PV-4).